The primary structure comprises 403 residues: S-adenosylmethionine synthase (403 aa).

His15 provides a ligand contact to ATP. Asp17 contacts Mg(2+). Glu43 lines the K(+) pocket. 2 residues coordinate L-methionine: Glu56 and Gln99. Residues 99–109 form a flexible loop region; sequence QSPHIAQGVDR. ATP-binding positions include 166 to 168, 232 to 233, Asp241, 247 to 248, Ala264, and Lys268; these read DAK, KF, and RK. Asp241 contributes to the L-methionine binding site. Residue Lys272 coordinates L-methionine.

The protein belongs to the AdoMet synthase family. As to quaternary structure, homotetramer; dimer of dimers. Requires Mg(2+) as cofactor. K(+) serves as cofactor.

It is found in the cytoplasm. It carries out the reaction L-methionine + ATP + H2O = S-adenosyl-L-methionine + phosphate + diphosphate. It participates in amino-acid biosynthesis; S-adenosyl-L-methionine biosynthesis; S-adenosyl-L-methionine from L-methionine: step 1/1. Its function is as follows. Catalyzes the formation of S-adenosylmethionine (AdoMet) from methionine and ATP. The overall synthetic reaction is composed of two sequential steps, AdoMet formation and the subsequent tripolyphosphate hydrolysis which occurs prior to release of AdoMet from the enzyme. This is S-adenosylmethionine synthase from Stenotrophomonas maltophilia (strain K279a).